We begin with the raw amino-acid sequence, 154 residues long: Superoxide dismutase [Cu-Zn] (154 aa).

Residues histidine 47, histidine 49, and histidine 64 each coordinate Cu cation. Cysteines 58 and 147 form a disulfide. The Zn(2+) site is built by histidine 64, histidine 72, histidine 81, and aspartate 84. Histidine 121 lines the Cu cation pocket. A compositionally biased stretch (basic and acidic residues) spans 125 to 136 (DDLGKGGNEESL). The tract at residues 125–144 (DDLGKGGNEESLKTGNAGPR) is disordered. Arginine 144 contributes to the substrate binding site.

Belongs to the Cu-Zn superoxide dismutase family. As to quaternary structure, homodimer. The cofactor is Cu cation. Zn(2+) is required as a cofactor.

It localises to the cytoplasm. The catalysed reaction is 2 superoxide + 2 H(+) = H2O2 + O2. Destroys radicals which are normally produced within the cells and which are toxic to biological systems. The polypeptide is Superoxide dismutase [Cu-Zn] (sod-1) (Neurospora crassa (strain ATCC 24698 / 74-OR23-1A / CBS 708.71 / DSM 1257 / FGSC 987)).